A 319-amino-acid polypeptide reads, in one-letter code: MKPLNIIFAGTPDFAARHLQALLDSEHNVIAVYSQPDRPAGRGKKLSASPVKELALSHDIPVFQPASLRAVEAQAELATLNADIMVVVAYGLILPQIVLDTPRLGCINVHGSILPRWRGAAPIQRALWAGDTETGVTIMQMDLGLDTGDMLLKTSLPIEDADTSASLYEKLAVQGPQALLEALDGLNAGKLKGEPQDPALANYAEKLSKEEARLDWNKSAKQLWQEIRAFNPWPVSYFEYQDSTIKVWQASYNPQPNSALAGSIIKADKHSIEVATAEGSLQLEIIQLPNKKPLAVADILNSRADWFAQGLSLLPEASS.

A (6S)-5,6,7,8-tetrahydrofolate-binding site is contributed by 112–115 (SILP).

The protein belongs to the Fmt family.

The catalysed reaction is L-methionyl-tRNA(fMet) + (6R)-10-formyltetrahydrofolate = N-formyl-L-methionyl-tRNA(fMet) + (6S)-5,6,7,8-tetrahydrofolate + H(+). In terms of biological role, attaches a formyl group to the free amino group of methionyl-tRNA(fMet). The formyl group appears to play a dual role in the initiator identity of N-formylmethionyl-tRNA by promoting its recognition by IF2 and preventing the misappropriation of this tRNA by the elongation apparatus. This chain is Methionyl-tRNA formyltransferase, found in Shewanella denitrificans (strain OS217 / ATCC BAA-1090 / DSM 15013).